The sequence spans 238 residues: Ciliary microtubule associated protein 1B (238 aa).

The stretch at Pro-182–Arg-207 is one STPGR repeat. The segment at Gly-206–Gly-238 is disordered.

Belongs to the CIMAP family.

Its subcellular location is the cell projection. It localises to the cilium. It is found in the flagellum. The sequence is that of Ciliary microtubule associated protein 1B (Cimap1b) from Mus musculus (Mouse).